A 584-amino-acid chain; its full sequence is Kinesin-like protein KIN-10C (584 aa).

One can recognise a Kinesin motor domain in the interval Pro11–Val324. Residue Gly99–Thr106 participates in ATP binding. Disordered stretches follow at residues Ser377 to Gln398 and Asp445 to Thr469.

Belongs to the TRAFAC class myosin-kinesin ATPase superfamily. Kinesin family. KIN-10 subfamily.

This is Kinesin-like protein KIN-10C from Oryza sativa subsp. japonica (Rice).